Reading from the N-terminus, the 152-residue chain is Interleukin-3 (152 aa).

An N-terminal signal peptide occupies residues 1 to 19 (MSRLPVLLLLQLLVRPGLQ). 2 N-linked (GlcNAc...) asparagine glycosylation sites follow: N34 and N89. Residues C35 and C103 are joined by a disulfide bond.

This sequence belongs to the IL-3 family. As to quaternary structure, monomer. Activated T-cells, mast cells, natural killer cells.

Its subcellular location is the secreted. In terms of biological role, granulocyte/macrophage colony-stimulating factors are cytokines that act in hematopoiesis by controlling the production, differentiation, and function of 2 related white cell populations of the blood, the granulocytes and the monocytes-macrophages. Its function is as follows. This CSF induces granulocytes, macrophages, mast cells, stem cells, erythroid cells, eosinophils and megakaryocytes. This Pan troglodytes (Chimpanzee) protein is Interleukin-3 (IL3).